We begin with the raw amino-acid sequence, 641 residues long: Calpain-6 (641 aa).

Positions 26–343 constitute a Calpain catalytic domain; it reads LFCDPTFLPE…FHKLNVCRNV (318 aa). The tract at residues 344–495 is domain III; the sequence is NNPVFGRKEL…IFSEVPVQLR (152 aa). Residues 498 to 621 enclose the C2 domain; it reads TLDMPKMSCW…YLRKKGGPTA (124 aa).

This sequence belongs to the peptidase C2 family. As to quaternary structure, interacts (via domain III) with microtubules. Interacts (via domain II) with ARHGEF2 (via the N-terminal zinc finger).

It localises to the cytoplasm. The protein localises to the perinuclear region. The protein resides in the cytoskeleton. Its subcellular location is the spindle. In terms of biological role, microtubule-stabilizing protein that may be involved in the regulation of microtubule dynamics and cytoskeletal organization. May act as a regulator of RAC1 activity through interaction with ARHGEF2 to control lamellipodial formation and cell mobility. Does not seem to have protease activity as it has lost the active site residues. In Mus musculus (Mouse), this protein is Calpain-6 (Capn6).